The sequence spans 324 residues: Annexin A10 (324 aa).

Annexin repeat units lie at residues 17 to 88 (FNPI…GLMY), 89 to 160 (PPPL…NLVQ), 171 to 243 (AMAA…AIVL), and 247 to 318 (DKPA…AICA).

This sequence belongs to the annexin family.

This Homo sapiens (Human) protein is Annexin A10 (ANXA10).